The following is an 82-amino-acid chain: ATP synthase subunit c, chloroplastic (82 aa).

Helical transmembrane passes span 7-27 and 57-77; these read GASV…PGIG and LAFM…LLFA.

Belongs to the ATPase C chain family. As to quaternary structure, F-type ATPases have 2 components, F(1) - the catalytic core - and F(0) - the membrane proton channel. F(1) has five subunits: alpha(3), beta(3), gamma(1), delta(1), epsilon(1). F(0) has four main subunits: a(1), b(1), b'(1) and c(10-14). The alpha and beta chains form an alternating ring which encloses part of the gamma chain. F(1) is attached to F(0) by a central stalk formed by the gamma and epsilon chains, while a peripheral stalk is formed by the delta, b and b' chains.

The protein localises to the plastid. The protein resides in the chloroplast thylakoid membrane. Functionally, f(1)F(0) ATP synthase produces ATP from ADP in the presence of a proton or sodium gradient. F-type ATPases consist of two structural domains, F(1) containing the extramembraneous catalytic core and F(0) containing the membrane proton channel, linked together by a central stalk and a peripheral stalk. During catalysis, ATP synthesis in the catalytic domain of F(1) is coupled via a rotary mechanism of the central stalk subunits to proton translocation. In terms of biological role, key component of the F(0) channel; it plays a direct role in translocation across the membrane. A homomeric c-ring of between 10-14 subunits forms the central stalk rotor element with the F(1) delta and epsilon subunits. The sequence is that of ATP synthase subunit c, chloroplastic from Emiliania huxleyi (Coccolithophore).